The primary structure comprises 380 residues: Capsular polysaccharide biosynthesis glycosyltransferase CapM (380 aa).

This sequence belongs to the glycosyltransferase group 1 family. Glycosyltransferase 4 subfamily.

It participates in capsule biogenesis; capsule polysaccharide biosynthesis. Its function is as follows. Required for the biosynthesis of type 1 capsular polysaccharide. This is Capsular polysaccharide biosynthesis glycosyltransferase CapM (capM) from Staphylococcus aureus.